A 441-amino-acid chain; its full sequence is MSKPIVAVVGRPNVGKSTLFNSLCGQQISIVKDTPGVTRDRIYAEVSWLNHNFTLIDTGGIEPDTGDIILSQMREQAEIAIETADVIIFMTDVKQGLVDSDSKVADMLRRSHKPVILVVNKVDSFEKMMPDVYEFYNLGIGEPFPISAVNKLGFGEVLDEVVSHFPEGSDTDKEDDRPKVAIIGKPNVGKSSIINKLVGKNRVIVSDIAGTTRDAIDTAIKYNGKEYVFIDTAGLRRKSKIKEDLERFSIIRTVAAVERADIAILVIDATEGVTEQDAKIAGIAHERGKGIIIAVNKWDDIEKNDKTIYEFTNKIKDTLAFMSYAEIIFVSAKTGQRLNKIYELVDHIVDAQTMRIPTGVLNEILTEAVAMKQPPSDKGKRLKIYYMTQVSVKPPTFVMFVNDVALTHFSYTRYIENRIRESFGFRGTSIRFINRERKEKE.

EngA-type G domains lie at 4 to 169 (PIVA…PEGS) and 178 to 353 (PKVA…DAQT). GTP is bound by residues 10–17 (GRPNVGKS), 57–61 (DTGGI), 120–123 (NKVD), 184–191 (GKPNVGKS), 231–235 (DTAGL), and 296–299 (NKWD). The KH-like domain maps to 354-438 (MRIPTGVLNE…SIRFINRERK (85 aa)).

Belongs to the TRAFAC class TrmE-Era-EngA-EngB-Septin-like GTPase superfamily. EngA (Der) GTPase family. As to quaternary structure, associates with the 50S ribosomal subunit.

In terms of biological role, GTPase that plays an essential role in the late steps of ribosome biogenesis. The chain is GTPase Der from Lachnospira eligens (strain ATCC 27750 / DSM 3376 / VPI C15-48 / C15-B4) (Eubacterium eligens).